We begin with the raw amino-acid sequence, 137 residues long: Small ribosomal subunit protein uS11 (137 aa).

A disordered region spans residues 116–137 (EDVTPIPHDGTRRPGGKRGRRV).

This sequence belongs to the universal ribosomal protein uS11 family. As to quaternary structure, part of the 30S ribosomal subunit.

In terms of biological role, located on the platform of the 30S subunit. This Methanopyrus kandleri (strain AV19 / DSM 6324 / JCM 9639 / NBRC 100938) protein is Small ribosomal subunit protein uS11.